The chain runs to 185 residues: Elongation factor P (185 aa).

The protein belongs to the elongation factor P family.

Its subcellular location is the cytoplasm. It participates in protein biosynthesis; polypeptide chain elongation. Involved in peptide bond synthesis. Stimulates efficient translation and peptide-bond synthesis on native or reconstituted 70S ribosomes in vitro. Probably functions indirectly by altering the affinity of the ribosome for aminoacyl-tRNA, thus increasing their reactivity as acceptors for peptidyl transferase. The polypeptide is Elongation factor P (Trichormus variabilis (strain ATCC 29413 / PCC 7937) (Anabaena variabilis)).